A 130-amino-acid chain; its full sequence is Large ribosomal subunit protein bL19 (130 aa).

Belongs to the bacterial ribosomal protein bL19 family.

Its function is as follows. This protein is located at the 30S-50S ribosomal subunit interface and may play a role in the structure and function of the aminoacyl-tRNA binding site. The polypeptide is Large ribosomal subunit protein bL19 (Burkholderia vietnamiensis (strain G4 / LMG 22486) (Burkholderia cepacia (strain R1808))).